The primary structure comprises 495 residues: UDP-N-acetylmuramoyl-L-alanyl-D-glutamate--2,6-diaminopimelate ligase (495 aa).

Serine 29 serves as a coordination point for UDP-N-acetyl-alpha-D-muramoyl-L-alanyl-D-glutamate. Glycine 111 to serine 117 provides a ligand contact to ATP. UDP-N-acetyl-alpha-D-muramoyl-L-alanyl-D-glutamate contacts are provided by residues threonine 153–threonine 154, serine 180, glutamine 186, and arginine 188. Lysine 220 carries the N6-carboxylysine modification. Meso-2,6-diaminopimelate is bound by residues arginine 384, aspartate 408–arginine 411, glycine 459, and glutamate 463. Residues aspartate 408–arginine 411 carry the Meso-diaminopimelate recognition motif motif.

Belongs to the MurCDEF family. MurE subfamily. Mg(2+) is required as a cofactor. In terms of processing, carboxylation is probably crucial for Mg(2+) binding and, consequently, for the gamma-phosphate positioning of ATP.

The protein localises to the cytoplasm. It catalyses the reaction UDP-N-acetyl-alpha-D-muramoyl-L-alanyl-D-glutamate + meso-2,6-diaminopimelate + ATP = UDP-N-acetyl-alpha-D-muramoyl-L-alanyl-gamma-D-glutamyl-meso-2,6-diaminopimelate + ADP + phosphate + H(+). It participates in cell wall biogenesis; peptidoglycan biosynthesis. In terms of biological role, catalyzes the addition of meso-diaminopimelic acid to the nucleotide precursor UDP-N-acetylmuramoyl-L-alanyl-D-glutamate (UMAG) in the biosynthesis of bacterial cell-wall peptidoglycan. This Xylella fastidiosa (strain Temecula1 / ATCC 700964) protein is UDP-N-acetylmuramoyl-L-alanyl-D-glutamate--2,6-diaminopimelate ligase.